The sequence spans 865 residues: MADNLYDSSIIEKQLKEKIENALSIHSYPTAIFFSDKLLNLVTIHSKEYVKILYILCDALYLDRQFQRSSYLIQKYLNAIEEIDKKGEDYQYIDDIHSHHHNQQQNIFYKRIKKEKEDEQYTNTILKLKYLAAKCKIETNEFDQCLQILNKDNDSSENMDDENNNINNNNNKIKKENEINNDNCDDDDDDDDDDDDDDDDEKDSNQLLKFYTNSKSNKSKDISENNSNNENTTKESINKNNTDSSSIDNKNNNKNNNNNNNNNNNNNNNNNNNNNNNNNNNNNNNNNNNNNNFNKETLIIRSSISCLKGKCYESMDNLKKAKFWYIKALLTDYNCFEAFESLTKNHLLTYQEEISLLEKLKFSSDDSWIKEIYSLSLKKYDSPKFTFNYKYLELYDSLNHQNSNNNTFGANNNNNNNNNNNNNNNNNNNNNSNNDISTEDLISVKTLSSSSSSPSKKQENNNLITINEIRKKLIECNDIQTWISEYYFYRHQFQESYSITKRILKQDKYYSNQICLMVNISSMFELQLTNELYFTCHQLVDSFTSSLNNGSHGGSHGGGGGGSHGGSSGNGGAISWYGVACYYHLIQNSDQTQRFFTKSTTLDSRMGASWLGFGHFFASKGEHDQAMAAYRTSSRLLTGCHLPLLCIGMELIRVHNLNLASQYILQAKDICPYDPMIFNELGIIEYKNSQYNEAIKLFETALEICKIKSKASSSSSSSSNYHNLNLSNISFSGVGSSGIGNNNNNNNNRRTTTTTTTTSNNQKKNSSNNKTMIAYLESWEPTIYNLAHCYRKLRKFELALHYYTMSLSLLPNNPSTYSALGFTHHLQGNFDEAIDYYHQSLSIRDDTFTNVLLHKALSLSILQYD.

TPR repeat units lie at residues 11–42 (IEKQ…LNLV), 46–75 (SKEY…LIQK), and 88–149 (EDYQ…LQIL). The disordered stretch occupies residues 153–293 (NDSSENMDDE…NNNNNNNNNF (141 aa)). Acidic residues predominate over residues 183–202 (NCDDDDDDDDDDDDDDDDEK). The span at 249–292 (NKNNNKNNNNNNNNNNNNNNNNNNNNNNNNNNNNNNNNNNNNNN) shows a compositional bias: low complexity. TPR repeat units lie at residues 300–331 (IRSS…ALLT), 336–359 (FEAF…LLEK), 366–438 (DSWI…DIST), 478–506 (DIQT…ILKQ), 515–542 (CLMV…LVDS), 573–602 (AISW…STTL), 607–635 (GASW…TSSR), 642–670 (LPLL…AKDI), and 675–709 (PMIF…KIKS). Over residues 403–434 (SNNNTFGANNNNNNNNNNNNNNNNNNNNNSNN) the composition is skewed to low complexity. The segment at 403-436 (SNNNTFGANNNNNNNNNNNNNNNNNNNNNSNNDI) is disordered. The segment at 738 to 767 (GIGNNNNNNNNRRTTTTTTTTSNNQKKNSS) is disordered. TPR repeat units follow at residues 777–809 (ESWE…SLSL) and 814–843 (PSTY…SLSI).

This sequence belongs to the APC6/CDC16 family. The APC/C is composed of at least 13 subunits that stay tightly associated throughout the cell cycle: anapc1, anapc2, anapc3, anapc4, anapc5, anapc6, anapc7, anapc8, anapc10, anapc11, cdc20, cdc26 and cdh1.

It is found in the nucleus. It participates in protein modification; protein ubiquitination. Its function is as follows. Component of the anaphase promoting complex/cyclosome (APC/C), a cell cycle-regulated E3 ubiquitin-protein ligase complex that controls progression through mitosis and the G1 phase of the cell cycle. This chain is Anaphase-promoting complex subunit 6 (anapc6), found in Dictyostelium discoideum (Social amoeba).